Reading from the N-terminus, the 146-residue chain is Small ribosomal subunit protein uS5 (146 aa).

Positions 8 to 71 (FSEVVVNIGR…DDAFKNIIKV (64 aa)) constitute an S5 DRBM domain.

Belongs to the universal ribosomal protein uS5 family. As to quaternary structure, part of the 30S ribosomal subunit. Contacts proteins S4 and S8.

Its function is as follows. With S4 and S12 plays an important role in translational accuracy. Located at the back of the 30S subunit body where it stabilizes the conformation of the head with respect to the body. This Helicobacter hepaticus (strain ATCC 51449 / 3B1) protein is Small ribosomal subunit protein uS5.